The following is a 142-amino-acid chain: Mediator of RNA polymerase II transcription subunit 21 (142 aa).

Positions Ala-87–Glu-131 form a coiled coil.

The protein belongs to the Mediator complex subunit 21 family. Component of the Mediator complex.

The protein localises to the nucleus. Functionally, component of the Mediator complex, a coactivator involved in the regulated transcription of nearly all RNA polymerase II-dependent genes. Mediator functions as a bridge to convey information from gene-specific regulatory proteins to the basal RNA polymerase II transcription machinery. Mediator is recruited to promoters by direct interactions with regulatory proteins and serves as a scaffold for the assembly of a functional preinitiation complex with RNA polymerase II and the general transcription factors. This is Mediator of RNA polymerase II transcription subunit 21 (SRB7) from Eremothecium gossypii (strain ATCC 10895 / CBS 109.51 / FGSC 9923 / NRRL Y-1056) (Yeast).